We begin with the raw amino-acid sequence, 250 residues long: Pyrroloquinoline-quinone synthase (250 aa).

This sequence belongs to the PqqC family.

It carries out the reaction 6-(2-amino-2-carboxyethyl)-7,8-dioxo-1,2,3,4,7,8-hexahydroquinoline-2,4-dicarboxylate + 3 O2 = pyrroloquinoline quinone + 2 H2O2 + 2 H2O + H(+). It participates in cofactor biosynthesis; pyrroloquinoline quinone biosynthesis. In terms of biological role, ring cyclization and eight-electron oxidation of 3a-(2-amino-2-carboxyethyl)-4,5-dioxo-4,5,6,7,8,9-hexahydroquinoline-7,9-dicarboxylic-acid to PQQ. This chain is Pyrroloquinoline-quinone synthase, found in Xanthomonas campestris pv. campestris (strain 8004).